We begin with the raw amino-acid sequence, 441 residues long: Homogentisate 1,2-dioxygenase (441 aa).

Residue His287 is the Proton acceptor of the active site. The Fe cation site is built by His330 and Glu336. Tyr345 and His366 together coordinate homogentisate. Position 366 (His366) interacts with Fe cation.

The protein belongs to the homogentisate dioxygenase family. Hexamer; dimer of trimers. Fe cation is required as a cofactor.

The catalysed reaction is homogentisate + O2 = 4-maleylacetoacetate + H(+). It participates in amino-acid degradation; L-phenylalanine degradation; acetoacetate and fumarate from L-phenylalanine: step 4/6. Involved in the catabolism of homogentisate (2,5-dihydroxyphenylacetate or 2,5-OH-PhAc), a central intermediate in the degradation of phenylalanine and tyrosine. Catalyzes the oxidative ring cleavage of the aromatic ring of homogentisate to yield maleylacetoacetate. The protein is Homogentisate 1,2-dioxygenase of Xanthomonas oryzae pv. oryzae (strain MAFF 311018).